The primary structure comprises 67 residues: Small ribosomal subunit protein bS21 (67 aa).

Basic and acidic residues predominate over residues 37-52 (EKPSERKAREAAEAVR). The tract at residues 37-67 (EKPSERKAREAAEAVRRARKMERKRLEREGF) is disordered.

This sequence belongs to the bacterial ribosomal protein bS21 family.

The polypeptide is Small ribosomal subunit protein bS21 (Gluconacetobacter diazotrophicus (strain ATCC 49037 / DSM 5601 / CCUG 37298 / CIP 103539 / LMG 7603 / PAl5)).